The chain runs to 829 residues: MKYNPQAIEEKWQHIWEEKEMFRSEHGSDKPKYYVLEMFPYPSGNIHMGHVRNYSIGDVVARFKRMQGFNVLHPMGWDAFGLPAENAAIKHDTHPAKWTYSNIDNMRSQLKRLGYSYDWRRELATCDAEYYRWEQLFFLKFMEKGLIYRKKAPQNWCPKCNTVLANEQVIDGLCWRCDSVVEQRDLAQWFLRITSYAEELLADLEKLTGGWPDRVLTMQHNWIGKSVGAEIEFAVDGSDETVKVFTTRPDTVFGSTFMSIAPEHPLVEKLITGTGQEETVRAFVTRIRNMDRIERTADTLEKEGVFTGAYCINPLSGRRMPIYVANFVLAEYGTGAVMAVPAHDERDFEFARKYDLPMEVVIQPEGAELTPATMETAYTGQGTMVGSGQFSGLPNEEGKTKIAEWLEANGKGKRTVNYRLRDWNISRQRYWGAPIPVVYCEKCGIVPEKAENLPVRLPLDIKTRSDGRSPLGETPEFYECRCPACGEKARRETDTMDTFVESSWYFARYTSAGDNEAPFDAQALKYWLPVDQYIGGVEHAILHLLYARFFIKALRDCGYMDLDEPFANLLTQGMVLMDGAKMSKSKGNVVDPTEMISRYGADTVRLFCLFAAPPERDFDWSDSGIEGASRFVNRVWRLVEDLPAGMAPMAPCSSSSDDCTGAAAKDIRQKEHATVKKAGADIQNRFQFNTAISAVMELVNALYLTRDELGADEKGRRVLGSAVSSVLAMLAPITPHLCEELWEQLGHKDMLTARPWPRYDEDALLRDEVVIPVSVNGKLRSKMTVPAGTGKEELEKLALAEANVVRHTEGLTVRKVIVIPGKMVNVVAS.

The 'HIGH' region motif lies at 40–50 (PYPSGNIHMGH). The 'KMSKS' region signature appears at 581-585 (KMSKS). Position 584 (Lys584) interacts with ATP.

It belongs to the class-I aminoacyl-tRNA synthetase family.

It localises to the cytoplasm. It carries out the reaction tRNA(Leu) + L-leucine + ATP = L-leucyl-tRNA(Leu) + AMP + diphosphate. The polypeptide is Leucine--tRNA ligase (Oleidesulfovibrio alaskensis (strain ATCC BAA-1058 / DSM 17464 / G20) (Desulfovibrio alaskensis)).